We begin with the raw amino-acid sequence, 171 residues long: MSNSSLTLKQSGLRWLWLALLVFIADITIKLIVMDNMGYGWANRIEVLPFFNLLYVHNYGAAFSFLSDQEGWQRWLFTGIAFVVTGMLAYWMRRLPASDKWNNIAYALIIGGAVGNVFDRIVHGFVVDYLDFYWGTYHWPAFNLADSTICIGAAMIILDGFRAKKSAPSQS.

4 consecutive transmembrane segments (helical) span residues 15-35 (WLWL…IVMD), 47-67 (VLPF…SFLS), 72-92 (WQRW…AYWM), and 107-127 (ALII…GFVV). Active-site residues include Asp128 and Asp146. The chain crosses the membrane as a helical span at residues 141-161 (AFNLADSTICIGAAMIILDGF).

It belongs to the peptidase A8 family.

It is found in the cell inner membrane. It catalyses the reaction Release of signal peptides from bacterial membrane prolipoproteins. Hydrolyzes -Xaa-Yaa-Zaa-|-(S,diacylglyceryl)Cys-, in which Xaa is hydrophobic (preferably Leu), and Yaa (Ala or Ser) and Zaa (Gly or Ala) have small, neutral side chains.. Its pathway is protein modification; lipoprotein biosynthesis (signal peptide cleavage). Its function is as follows. This protein specifically catalyzes the removal of signal peptides from prolipoproteins. This is Lipoprotein signal peptidase from Vibrio cholerae serotype O1 (strain ATCC 39541 / Classical Ogawa 395 / O395).